We begin with the raw amino-acid sequence, 154 residues long: Transcriptional repressor NrdR (154 aa).

A zinc finger spans residues Cys-3 to Cys-34. The ATP-cone domain occupies Leu-49–Val-139.

It belongs to the NrdR family. Zn(2+) serves as cofactor.

Negatively regulates transcription of bacterial ribonucleotide reductase nrd genes and operons by binding to NrdR-boxes. In Listeria innocua serovar 6a (strain ATCC BAA-680 / CLIP 11262), this protein is Transcriptional repressor NrdR.